We begin with the raw amino-acid sequence, 22 residues long: Zinc metalloproteinase oxiagin (22 aa).

The Peptidase M12B domain maps to 14-22 (CYIEFYVVV).

The protein belongs to the venom metalloproteinase (M12B) family. P-III subfamily. P-IIId sub-subfamily. Heterotrimer; disulfide-linked. The heterotrimer consists of 1 metalloproteinase chain and 2 lectin chains. Requires Zn(2+) as cofactor. Post-translationally, N-glycosylated. In terms of tissue distribution, expressed by the venom gland.

The protein localises to the secreted. Its function is as follows. Snake venom metalloproteinase that inhibits the classical complement pathway dose-dependently. It acts by binding to carbohydrates of IgG within the antibody-sensitized sheep erythrocytes (EA) complex, and thus prevents interaction of component C2 with immobilized C4b. Also induces cation-independent hemagglutination that can be prevented by D-galactose pretreatment. This Naja oxiana (Central Asian cobra) protein is Zinc metalloproteinase oxiagin.